The sequence spans 977 residues: Receptor protein-tyrosine kinase CEPR2 (977 aa).

The signal sequence occupies residues 1–31; it reads MSRRPDLLRGSVVATVAATFLLFIFPPNVES. Over 32–620 the chain is Extracellular; the sequence is TVEKQALFRF…NVKRNSSLDG (589 aa). N-linked (GlcNAc...) asparagine glycosylation occurs at Asn85. LRR repeat units follow at residues 97 to 121, 122 to 146, 148 to 167, 168 to 192, 193 to 217, 219 to 241, 242 to 265, 266 to 288, 290 to 312, 313 to 338, 340 to 361, 363 to 385, 386 to 409, 411 to 433, 434 to 457, 458 to 481, 482 to 504, 506 to 529, 530 to 553, and 555 to 576; these read LTKL…IVNC, KNLK…PLKS, EILD…WIGN, MNQL…SIGG, LKKL…IFDL, ALDT…ISRL, VNLT…IKNL, TRLR…ELGV, KELR…GFGD, LSHL…GRFS, LDTV…LCQN, KLQF…YGEC, KSLL…FWSL, LAKM…IGLS, TELS…LGRL, TNIE…VGDL, KELS…ELKN, VKLV…LSQI, ASLN…LVKL, and LSFI…LLAV. Asn128 carries N-linked (GlcNAc...) asparagine glycosylation. N-linked (GlcNAc...) asparagine glycosylation is present at Asn205. Asn243, Asn251, and Asn264 each carry an N-linked (GlcNAc...) asparagine glycan. N-linked (GlcNAc...) asparagine glycans are attached at residues Asn301 and Asn325. 2 N-linked (GlcNAc...) asparagine glycosylation sites follow: Asn469 and Asn491. Asn615 carries an N-linked (GlcNAc...) asparagine glycan. A helical membrane pass occupies residues 621–641; sequence TLLFLALAIVVVVLVSGLFAL. The Cytoplasmic segment spans residues 642–977; sequence RYRVVKIREL…SQDTTGKITV (336 aa). The region spanning 683-965 is the Protein kinase domain; sequence LDEDHVIGSG…RKLDDADPCV (283 aa). Residues 689–697 and Lys712 each bind ATP; that span reads IGSGSAGKV. Residue Tyr801 is modified to Phosphotyrosine. Asp814 (proton acceptor) is an active-site residue. Ser846 carries the post-translational modification Phosphoserine. 2 positions are modified to phosphotyrosine: Tyr854 and Tyr861.

This sequence belongs to the protein kinase superfamily. Ser/Thr protein kinase family. Interacts with the root-derived peptide CEP1. Binds to the ammonium transporter AMT1-1. Expressed in mature leaves, primary roots, and the root tips of both primary and lateral roots.

Its subcellular location is the cell membrane. The enzyme catalyses L-tyrosyl-[protein] + ATP = O-phospho-L-tyrosyl-[protein] + ADP + H(+). In terms of biological role, receptor kinase involved in the perception of C-terminally encoded plant signaling peptide (CEP) and subsequent regulation of root and shoot development. Together with CEPR1, mediates systemic nitrogen (N)-demand signaling upon the perception of root-derived peptides (e.g. CEP1) via the up-regulation of genes involved in N uptake and assimilation pathways. The polypeptide is Receptor protein-tyrosine kinase CEPR2 (Arabidopsis thaliana (Mouse-ear cress)).